The primary structure comprises 186 residues: Protein FAM9B (186 aa).

The segment at 1 to 93 (MAAWGKKHAG…KHALRKKQLK (93 aa)) is disordered. Basic and acidic residues-rich tracts occupy residues 10 to 27 (GKDP…FTET) and 34 to 58 (DEHG…KPED). Residues 66 to 93 (KRKRMKMDKTCSKTKNKSKHALRKKQLK) are compositionally biased toward basic residues.

This sequence belongs to the XLR/SYCP3 family. In terms of tissue distribution, expressed in testis and ovary (at protein level).

It localises to the nucleus. The protein localises to the cytoplasm. The protein resides in the chromosome. May play a role in meiosis. The chain is Protein FAM9B from Homo sapiens (Human).